The following is a 209-amino-acid chain: MTSSALVPSTASEGDRIAEVARNTAETRIRVRVNLDGTGNARLSSGIGFFDHMLDQIARHGLIDLDIECEGDLHIDGHHTVEDVGITLGQAFARAVGDKKGIRRYGHAYVPLDEALSRVVVDFSGRPGLHMDVKFTAGSIGQLDTQLVYEFFQGFVNHAGVTLHIDNLKGFNAHHQCETIFKAFARALRAALARDPRSAGVIPSTKGSL.

Belongs to the imidazoleglycerol-phosphate dehydratase family.

It is found in the cytoplasm. The enzyme catalyses D-erythro-1-(imidazol-4-yl)glycerol 3-phosphate = 3-(imidazol-4-yl)-2-oxopropyl phosphate + H2O. It functions in the pathway amino-acid biosynthesis; L-histidine biosynthesis; L-histidine from 5-phospho-alpha-D-ribose 1-diphosphate: step 6/9. In Paracidovorax citrulli (strain AAC00-1) (Acidovorax citrulli), this protein is Imidazoleglycerol-phosphate dehydratase.